Here is a 65-residue protein sequence, read N- to C-terminus: uncharacterized protein (65 aa).

Helical transmembrane passes span 4–24 and 45–65; these read TIWL…MLYP and FGGG…KTIG.

It is found in the cell membrane. This is an uncharacterized protein from Escherichia coli O157:H7.